Here is a 437-residue protein sequence, read N- to C-terminus: Adenylosuccinate synthetase 1 (437 aa).

GTP contacts are provided by residues 13-19 (GDEGKGK) and 41-43 (GHT). The active-site Proton acceptor is aspartate 14. 2 residues coordinate Mg(2+): aspartate 14 and glycine 41. IMP-binding positions include 14 to 17 (DEGK), 39 to 42 (NAGH), threonine 130, arginine 144, glutamine 225, threonine 240, and arginine 310. The active-site Proton donor is the histidine 42. Residue 306–312 (ATTGRLR) coordinates substrate. GTP-binding positions include arginine 312, 338–340 (KLD), and 421–423 (STG).

This sequence belongs to the adenylosuccinate synthetase family. As to quaternary structure, homodimer. Mg(2+) is required as a cofactor.

It localises to the cytoplasm. It carries out the reaction IMP + L-aspartate + GTP = N(6)-(1,2-dicarboxyethyl)-AMP + GDP + phosphate + 2 H(+). It functions in the pathway purine metabolism; AMP biosynthesis via de novo pathway; AMP from IMP: step 1/2. Plays an important role in the de novo pathway of purine nucleotide biosynthesis. Catalyzes the first committed step in the biosynthesis of AMP from IMP. The protein is Adenylosuccinate synthetase 1 of Pseudoalteromonas translucida (strain TAC 125).